The following is a 190-amino-acid chain: Nuclear transcription factor Y subunit A-7 (190 aa).

The interval methionine 1–arginine 33 is disordered. A compositionally biased stretch (basic and acidic residues) spans glutamate 7–histidine 24. A Subunit association domain (SAD) motif is present at residues phenylalanine 103–asparagine 126. A DNA-binding region (NFYA/HAP2-type) is located at residues lysine 133–alanine 158. Residues arginine 147–serine 190 are disordered. The segment covering alanine 158–serine 174 has biased composition (basic and acidic residues). The segment covering serine 177–serine 190 has biased composition (low complexity).

This sequence belongs to the NFYA/HAP2 subunit family. As to quaternary structure, heterotrimeric transcription factor composed of three components, NF-YA, NF-YB and NF-YC. NF-YB and NF-YC must interact and dimerize for NF-YA association and DNA binding.

It is found in the nucleus. Stimulates the transcription of various genes by recognizing and binding to a CCAAT motif in promoters. This is Nuclear transcription factor Y subunit A-7 (NFYA7) from Arabidopsis thaliana (Mouse-ear cress).